The sequence spans 326 residues: Serpentine receptor class alpha-12 (326 aa).

Topologically, residues 1–17 are extracellular; that stretch reads MSCASEVQAQLFTHPVQ. A helical transmembrane segment spans residues 18 to 38; sequence IIYACVQTVLFLATIIGSLLA. Residues 39-54 are Cytoplasmic-facing; it reads IVQLCKKTTIPDSTKV. A helical membrane pass occupies residues 55 to 75; that stretch reads LLIGALFFANAHELAYFSSPF. At 76 to 101 the chain is on the extracellular side; the sequence is KVFKMNLFHTNTSCYPLASTLECIPT. The helical transmembrane segment at 102–122 threads the bilayer; that stretch reads TTVLAMGISGNMLIQSALSIF. The Cytoplasmic segment spans residues 123–138; it reads RLLATIFPVCYSRMRA. The helical transmembrane segment at 139-159 threads the bilayer; sequence LPGVVLLFMVLIPSFLSYSWI. The Extracellular portion of the chain corresponds to 160 to 185; sequence RSDIVLDDYQMFCSQWSANISSRANT. Residues 186–206 traverse the membrane as a helical segment; sequence YLEYCSYLTVAHIIINALIIL. The Cytoplasmic segment spans residues 207–234; sequence RNRSVESKCRFDVQQRYLNSETLKTTQT. A helical membrane pass occupies residues 235–255; the sequence is ICYLSIAQFLAMFLYSGGVLF. The Extracellular portion of the chain corresponds to 256–270; the sequence is MRKNQKNIPTLIYIN. The chain crosses the membrane as a helical span at residues 271-291; it reads VIVWVYAPPYACVSLAPLILF. The Cytoplasmic segment spans residues 292-326; it reads SLWNLKKQRQIRIQSITVQKETQEDHIRKLQLSWG.

It belongs to the nematode receptor-like protein sra family.

It is found in the membrane. The sequence is that of Serpentine receptor class alpha-12 from Caenorhabditis briggsae.